The primary structure comprises 291 residues: Ribose-phosphate pyrophosphokinase (291 aa).

Residues 34–36 and 92–93 contribute to the ATP site; these read DGE and RQ. Mg(2+) is bound by residues His125 and Asp165. Lys188 is an active-site residue. Positions 190 and 214 each coordinate D-ribose 5-phosphate.

Belongs to the ribose-phosphate pyrophosphokinase family. Class III (archaeal) subfamily. Requires Mg(2+) as cofactor.

It is found in the cytoplasm. The catalysed reaction is D-ribose 5-phosphate + ATP = 5-phospho-alpha-D-ribose 1-diphosphate + AMP + H(+). Its pathway is metabolic intermediate biosynthesis; 5-phospho-alpha-D-ribose 1-diphosphate biosynthesis; 5-phospho-alpha-D-ribose 1-diphosphate from D-ribose 5-phosphate (route I): step 1/1. In terms of biological role, involved in the biosynthesis of the central metabolite phospho-alpha-D-ribosyl-1-pyrophosphate (PRPP) via the transfer of pyrophosphoryl group from ATP to 1-hydroxyl of ribose-5-phosphate (Rib-5-P). This chain is Ribose-phosphate pyrophosphokinase, found in Methanopyrus kandleri (strain AV19 / DSM 6324 / JCM 9639 / NBRC 100938).